The following is a 397-amino-acid chain: Putative serine/threonine-protein kinase R301 (397 aa).

The 373-residue stretch at 25–397 (QIKSTSVGSG…IIRHFNSPRL (373 aa)) folds into the Protein kinase domain. ATP is bound by residues 31–39 (VGSGGSDNI) and Lys-53. Asp-218 (proton acceptor) is an active-site residue.

This sequence belongs to the protein kinase superfamily. Ser/Thr protein kinase family.

It is found in the virion. It catalyses the reaction L-seryl-[protein] + ATP = O-phospho-L-seryl-[protein] + ADP + H(+). The catalysed reaction is L-threonyl-[protein] + ATP = O-phospho-L-threonyl-[protein] + ADP + H(+). This Acanthamoeba polyphaga (Amoeba) protein is Putative serine/threonine-protein kinase R301.